The primary structure comprises 357 residues: Holliday junction branch migration complex subunit RuvB (357 aa).

The segment covering 1-10 has biased composition (polar residues); that stretch reads MAIQSDSLSS. Positions 1–30 are disordered; the sequence is MAIQSDSLSSRPDAPRLVAPAPASPNEESI. The interval 5–195 is large ATPase domain (RuvB-L); it reads SDSLSSRPDA…FGIVSRLEFY (191 aa). ATP is bound by residues L34, R35, G76, K79, T80, T81, 142–144, R185, Y195, and R232; that span reads EDF. Mg(2+) is bound at residue T80. The small ATPAse domain (RuvB-S) stretch occupies residues 196 to 266; sequence NTDDLAHIVT…AANQALAMLE (71 aa). The interval 269–357 is head domain (RuvB-H); the sequence is PQGLDLMDRK…QPSSGDLFGA (89 aa). R305, R324, and R329 together coordinate DNA.

It belongs to the RuvB family. As to quaternary structure, homohexamer. Forms an RuvA(8)-RuvB(12)-Holliday junction (HJ) complex. HJ DNA is sandwiched between 2 RuvA tetramers; dsDNA enters through RuvA and exits via RuvB. An RuvB hexamer assembles on each DNA strand where it exits the tetramer. Each RuvB hexamer is contacted by two RuvA subunits (via domain III) on 2 adjacent RuvB subunits; this complex drives branch migration. In the full resolvosome a probable DNA-RuvA(4)-RuvB(12)-RuvC(2) complex forms which resolves the HJ.

It is found in the cytoplasm. The catalysed reaction is ATP + H2O = ADP + phosphate + H(+). In terms of biological role, the RuvA-RuvB-RuvC complex processes Holliday junction (HJ) DNA during genetic recombination and DNA repair, while the RuvA-RuvB complex plays an important role in the rescue of blocked DNA replication forks via replication fork reversal (RFR). RuvA specifically binds to HJ cruciform DNA, conferring on it an open structure. The RuvB hexamer acts as an ATP-dependent pump, pulling dsDNA into and through the RuvAB complex. RuvB forms 2 homohexamers on either side of HJ DNA bound by 1 or 2 RuvA tetramers; 4 subunits per hexamer contact DNA at a time. Coordinated motions by a converter formed by DNA-disengaged RuvB subunits stimulates ATP hydrolysis and nucleotide exchange. Immobilization of the converter enables RuvB to convert the ATP-contained energy into a lever motion, pulling 2 nucleotides of DNA out of the RuvA tetramer per ATP hydrolyzed, thus driving DNA branch migration. The RuvB motors rotate together with the DNA substrate, which together with the progressing nucleotide cycle form the mechanistic basis for DNA recombination by continuous HJ branch migration. Branch migration allows RuvC to scan DNA until it finds its consensus sequence, where it cleaves and resolves cruciform DNA. In Bordetella avium (strain 197N), this protein is Holliday junction branch migration complex subunit RuvB.